Here is a 114-residue protein sequence, read N- to C-terminus: Ribonuclease P protein component (114 aa).

The protein belongs to the RnpA family. In terms of assembly, consists of a catalytic RNA component (M1 or rnpB) and a protein subunit.

The catalysed reaction is Endonucleolytic cleavage of RNA, removing 5'-extranucleotides from tRNA precursor.. RNaseP catalyzes the removal of the 5'-leader sequence from pre-tRNA to produce the mature 5'-terminus. It can also cleave other RNA substrates such as 4.5S RNA. The protein component plays an auxiliary but essential role in vivo by binding to the 5'-leader sequence and broadening the substrate specificity of the ribozyme. The sequence is that of Ribonuclease P protein component from Buchnera aphidicola subsp. Baizongia pistaciae (strain Bp).